Consider the following 712-residue polypeptide: MKRFMKLTAVWTLWLSLTLGLLSPVHAAPDTSVSNKQNFSTDVIYQIFTDRFSDGNPANNPTGAAFDGSCTNLRLYCGGDWQGIINKINDGYLTGMGITAIWISQPVENIYSVINYSGVHNTAYHGYWARDFKKTNPAYGTMQDFKNLIDTAHAHNIKVIIDFAPNHTSPASSDDPSFAENGRLYDNGNLLGGYTNDTQNLFHHYGGTDFSTIENGIYKNLYDLADLNHNNSSVDVYLKDAIKMWLDLGVDGIRVDAVKHMPFGWQKSFMSTINNYKPVFNFGEWFLGVNEISPEYHQFANESGMSLLDFPFAQKARQVFRDNTDNMYGLKAMLEGSEVDYAQVNDQVTFIDNHDMERFHTSNGDRRKLEQALAFTLTSRGVPAIYYGSEQYMSGGNDPDNRARIPSFSTTTTAYQVIQKLAPLRKSNPAIAYGSTQERWINNDVIIYERKFGNNVAVVAINRNMNTPASITGLVTSLPQGSYNDVLGGILNGNTLTVGAGGAASNFTLAPGGTAVWQYTTDATAPINGNVGPMMAKAGVTITIDGRASARQGTVYFGTTAVTGADIVAWEDTQIQVKILRVPGGIYDIRVANAAGAASNIYDNFEVLTGDQVTVRFVINNATTALGQNVFLTGNVSELGNWDPNNAIGPMYNQVVYQYPTWYYDVSVPAGQTIEFKFLKKQGSTVTWEGGANRTFTTPTSGTATVNVNWQP.

Positions 1-27 are cleaved as a signal peptide; it reads MKRFMKLTAVWTLWLSLTLGLLSPVHA. An A1 region spans residues 28–165; the sequence is APDTSVSNKQ…NIKVIIDFAP (138 aa). Ca(2+)-binding residues include Asp54, Asn56, Asn59, and Asn60. Cys70 and Cys77 are oxidised to a cystine. Gly78 and Asp80 together coordinate Ca(2+). Substrate is bound at residue 127–128; the sequence is YW. Asn166 lines the Ca(2+) pocket. The segment at 166-229 is b; the sequence is NHTSPASSDD…NLYDLADLNH (64 aa). His167 is a binding site for substrate. Residue Ile217 participates in Ca(2+) binding. Residue 220–223 coordinates substrate; sequence NLYD. Asp226 contacts Ca(2+). An A2 region spans residues 230–433; that stretch reads NNSSVDVYLK…LRKSNPAIAY (204 aa). Substrate is bound at residue Arg254. The active-site Nucleophile is Asp256. Residue 259-260 coordinates substrate; it reads KH. His260 is a binding site for Ca(2+). The Proton donor role is filled by Glu284. The substrate site is built by His354, Asp398, and Arg402. Positions 434-522 are c; that stretch reads GSTQERWINN…GTAVWQYTTD (89 aa). The interval 523 to 608 is d; sequence ATAPINGNVG…SNIYDNFEVL (86 aa). The IPT/TIG domain maps to 526-606; sequence PINGNVGPMM…AASNIYDNFE (81 aa). The CBM20 domain occupies 607–712; sequence VLTGDQVTVR…TATVNVNWQP (106 aa). The interval 609–712 is e; sequence TGDQVTVRFV…TATVNVNWQP (104 aa).

This sequence belongs to the glycosyl hydrolase 13 family. In terms of assembly, monomer. Requires Ca(2+) as cofactor.

Its subcellular location is the secreted. It carries out the reaction Cyclizes part of a (1-&gt;4)-alpha-D-glucan chain by formation of a (1-&gt;4)-alpha-D-glucosidic bond.. This is Cyclomaltodextrin glucanotransferase (cgt) from Bacillus sp. (strain 38-2).